The sequence spans 155 residues: SsrA-binding protein (155 aa).

It belongs to the SmpB family.

Its subcellular location is the cytoplasm. Functionally, required for rescue of stalled ribosomes mediated by trans-translation. Binds to transfer-messenger RNA (tmRNA), required for stable association of tmRNA with ribosomes. tmRNA and SmpB together mimic tRNA shape, replacing the anticodon stem-loop with SmpB. tmRNA is encoded by the ssrA gene; the 2 termini fold to resemble tRNA(Ala) and it encodes a 'tag peptide', a short internal open reading frame. During trans-translation Ala-aminoacylated tmRNA acts like a tRNA, entering the A-site of stalled ribosomes, displacing the stalled mRNA. The ribosome then switches to translate the ORF on the tmRNA; the nascent peptide is terminated with the 'tag peptide' encoded by the tmRNA and targeted for degradation. The ribosome is freed to recommence translation, which seems to be the essential function of trans-translation. This Bacillus cereus (strain B4264) protein is SsrA-binding protein.